The primary structure comprises 402 residues: Elongation factor Tu (402 aa).

The tr-type G domain maps to 16 to 211 (KEHINIGTIG…AVDSYIDSPV (196 aa)). The tract at residues 25 to 32 (GHVDHGKT) is G1. GTP is bound at residue 25–32 (GHVDHGKT). Threonine 32 provides a ligand contact to Mg(2+). The G2 stretch occupies residues 66–70 (GITIN). The interval 87–90 (DCPG) is G3. GTP is bound by residues 87-91 (DCPGH) and 142-145 (NKID). Residues 142–145 (NKID) are G4. Positions 181 to 183 (SAR) are G5.

It belongs to the TRAFAC class translation factor GTPase superfamily. Classic translation factor GTPase family. EF-Tu/EF-1A subfamily. Monomer.

It is found in the cytoplasm. The enzyme catalyses GTP + H2O = GDP + phosphate + H(+). Its function is as follows. GTP hydrolase that promotes the GTP-dependent binding of aminoacyl-tRNA to the A-site of ribosomes during protein biosynthesis. In Mesomycoplasma hyopneumoniae (strain J / ATCC 25934 / NCTC 10110) (Mycoplasma hyopneumoniae), this protein is Elongation factor Tu.